The sequence spans 103 residues: UPF0145 protein BC_1816 (103 aa).

This sequence belongs to the UPF0145 family.

In Bacillus cereus (strain ATCC 14579 / DSM 31 / CCUG 7414 / JCM 2152 / NBRC 15305 / NCIMB 9373 / NCTC 2599 / NRRL B-3711), this protein is UPF0145 protein BC_1816.